Consider the following 107-residue polypeptide: U1-lycotoxin-Ls1e (107 aa).

Positions 1 to 20 (MMKVLVVVALLVTLISYSSS) are cleaved as a signal peptide. The propeptide occupies 21–41 (EGIDDLEADELLSLMANEQTR). 4 cysteine pairs are disulfide-bonded: Cys-44–Cys-59, Cys-51–Cys-68, Cys-58–Cys-86, and Cys-70–Cys-84.

This sequence belongs to the neurotoxin 19 (CSTX) family. 04 (U1-Lctx) subfamily. As to expression, expressed by the venom gland.

It is found in the secreted. This Lycosa singoriensis (Wolf spider) protein is U1-lycotoxin-Ls1e.